Reading from the N-terminus, the 665-residue chain is MLQRSESGFKDIESMQDSNADKPSRTWTSSLRSLLGLVMVAMLIVVSATLVGLDYRRARSAAIAGAEDNMDAFVGRLVDRLGALSGDTSALVSLVASVANSFLVPPPERMNDKVAVLREGIARSPHIDGVYVGYPSGAFFHVVDLDSAAWRMALDAPRGAAIAVRSMERNDQGKPFDRILFLDASGLQFAERHAASNGFDPRTRPWYRAAVNGKAPVAIGPYEMATTGNLGMTISQAHRGNPQIVIGADVVLDTITDFLSRERLTDDSVSFVLDAVGRPIIHSDSTMMRRIMASKGRDRPVATPQEDGLIESIRRNPPPAGKATLVEVGNRTYLVTVAPLESALLLSGHRVVVAAPLDELLAAANETLVQGLAVSGAVVVVAVLLALVLAHLITKSLNQLTDSANRLQDLDFATPIDVSSHVAEISTLNGAMNRARDAIFTFALYVPKELVRKGIESGHFGGRAAWRQEVTAMFTDIYDFTTISEGRSPEEVVAMLSEYFDLFSEVVAAHDGTIIQFHGDSVFAMWNAPVADTRHAEHACRCALAVEERLEAFNSAQRASGLPEFRTRFGIHTGTAVVGSVGAKERLQYTAMGDTVNVASRLEGMNKDYGTSVLASGAVVAQCKDMVKFRPLGTAKAKGRSTALDIYEVVGVVRAVNTTEAGTAA.

The tract at residues 1–25 (MLQRSESGFKDIESMQDSNADKPSR) is disordered. Over residues 7–24 (SGFKDIESMQDSNADKPS) the composition is skewed to basic and acidic residues. A run of 2 helical transmembrane segments spans residues 33–53 (SLLG…LVGL) and 373–393 (AVSG…AHLI). The HAMP domain occupies 394–444 (TKSLNQLTDSANRLQDLDFATPIDVSSHVAEISTLNGAMNRARDAIFTFAL). One can recognise a Guanylate cyclase domain in the interval 471-603 (TAMFTDIYDF…DTVNVASRLE (133 aa)). Mg(2+) contacts are provided by Asp476 and Asp520.

This sequence belongs to the adenylyl cyclase class-3 family. It depends on Mg(2+) as a cofactor.

It is found in the cell membrane. The enzyme catalyses ATP = 3',5'-cyclic AMP + diphosphate. Functionally, plays essential roles in regulation of cellular metabolism by catalyzing the synthesis of a second messenger, cAMP. In Rhizobium meliloti (strain 1021) (Ensifer meliloti), this protein is Adenylate cyclase 1 (cya1).